The sequence spans 459 residues: Argininosuccinate lyase (459 aa).

The protein belongs to the lyase 1 family. Argininosuccinate lyase subfamily.

The protein resides in the cytoplasm. It catalyses the reaction 2-(N(omega)-L-arginino)succinate = fumarate + L-arginine. It participates in amino-acid biosynthesis; L-arginine biosynthesis; L-arginine from L-ornithine and carbamoyl phosphate: step 3/3. The chain is Argininosuccinate lyase from Sulfurihydrogenibium sp. (strain YO3AOP1).